The sequence spans 609 residues: Proteasome-associated ATPase (609 aa).

The disordered stretch occupies residues 1 to 27; it reads MGSSERSEAFGTPRESDMSSGDEAELE. Residues 17 to 96 are a coiled coil; the sequence is DMSSGDEAEL…LREEVDRLGQ (80 aa). Position 296–301 (296–301) interacts with ATP; sequence GCGKTL. A docks into pockets in the proteasome alpha-ring region spans residues 608–609; it reads YL.

The protein belongs to the AAA ATPase family. As to quaternary structure, homohexamer. Assembles into a hexameric ring structure that caps the 20S proteasome core. Strongly interacts with the prokaryotic ubiquitin-like protein Pup through a hydrophobic interface; the interacting region of ARC lies in its N-terminal coiled-coil domain. There is one Pup binding site per ARC hexamer ring. Upon ATP-binding, the C-terminus of ARC interacts with the alpha-rings of the proteasome core, possibly by binding to the intersubunit pockets.

The protein operates within protein degradation; proteasomal Pup-dependent pathway. In terms of biological role, ATPase which is responsible for recognizing, binding, unfolding and translocation of pupylated proteins into the bacterial 20S proteasome core particle. May be essential for opening the gate of the 20S proteasome via an interaction with its C-terminus, thereby allowing substrate entry and access to the site of proteolysis. Thus, the C-termini of the proteasomal ATPase may function like a 'key in a lock' to induce gate opening and therefore regulate proteolysis. The sequence is that of Proteasome-associated ATPase from Mycobacterium avium (strain 104).